The sequence spans 456 residues: Anthocyanidin 3-O-galactosyltransferase F3GT1 (456 aa).

An anthocyanidin contacts are provided by serine 20, histidine 22, and glutamine 83. Histidine 22 functions as the Proton acceptor in the catalytic mechanism. The Charge relay role is filled by aspartate 118. An an anthocyanidin-binding site is contributed by histidine 150. 7 residues coordinate UDP: serine 281, tryptophan 333, alanine 334, histidine 351, asparagine 355, serine 356, and glutamate 359. Glycine 374 contributes to the an anthocyanidin binding site.

It belongs to the UDP-glycosyltransferase family. As to expression, expressed at low levels in stems and leaves. Expressed in ovaries.

It carries out the reaction cyanidin + UDP-alpha-D-galactose = cyanidin 3-O-beta-D-galactoside + UDP + H(+). It functions in the pathway pigment biosynthesis; anthocyanin biosynthesis. Functionally, involved in anthocyanin biosynthesis by catalyzing the galactosylation of cyanidin. Required for the accumulation of anthocyanin in red-fleshed kiwifruit varieties. Seems to be the key enzyme regulating the accumulation of anthocyanin in red-fleshed kiwi fruits. This chain is Anthocyanidin 3-O-galactosyltransferase F3GT1, found in Actinidia chinensis var. chinensis (Chinese soft-hair kiwi).